Reading from the N-terminus, the 149-residue chain is Secreted RxLR effector protein 3 (149 aa).

An N-terminal signal peptide occupies residues 1-23; that stretch reads MRASTILFVLGAAILAVIGVTTA. Positions 38–53 match the RxLR-dEER motif; that stretch reads RLLRSGSMEQEPDEER.

It belongs to the RxLR effector family.

It localises to the secreted. The protein localises to the host nucleus. It is found in the host cytoplasm. Functionally, secreted effector that completely suppresses the host cell death induced by cell death-inducing proteins. The polypeptide is Secreted RxLR effector protein 3 (Plasmopara viticola (Downy mildew of grapevine)).